The following is a 62-amino-acid chain: Photosystem II reaction center protein Z (62 aa).

2 helical membrane passes run 8–28 (AVFA…VVFA) and 41–61 (FSGT…NSLI).

This sequence belongs to the PsbZ family. As to quaternary structure, PSII is composed of 1 copy each of membrane proteins PsbA, PsbB, PsbC, PsbD, PsbE, PsbF, PsbH, PsbI, PsbJ, PsbK, PsbL, PsbM, PsbT, PsbY, PsbZ, Psb30/Ycf12, at least 3 peripheral proteins of the oxygen-evolving complex and a large number of cofactors. It forms dimeric complexes.

It localises to the plastid. The protein localises to the chloroplast thylakoid membrane. Its function is as follows. May control the interaction of photosystem II (PSII) cores with the light-harvesting antenna, regulates electron flow through the 2 photosystem reaction centers. PSII is a light-driven water plastoquinone oxidoreductase, using light energy to abstract electrons from H(2)O, generating a proton gradient subsequently used for ATP formation. The chain is Photosystem II reaction center protein Z from Phalaenopsis aphrodite subsp. formosana (Moth orchid).